A 561-amino-acid polypeptide reads, in one-letter code: Transcription factor Clamp (561 aa).

The segment at 127–149 (FKCDVCSDMFPHLALLNAHKRMH) adopts a C2H2-type 1 zinc-finger fold. Zn(2+)-binding residues include cysteine 129, cysteine 132, histidine 145, and histidine 149. The segment at 290–315 (TGGTTPKREASSGSGHHPVKKRNSQQ) is disordered. C2H2-type zinc fingers lie at residues 360-382 (FSCN…KKLH), 388-410 (YKCS…ARIH), 416-438 (YKCQ…ERTH), 444-466 (YVCG…RRIH), 472-494 (YKCE…AKVH), and 500-522 (YKCE…RGIH).

Homodimer. Interacts with msl-2; promoting recruitment of the male-specific lethal (MSL) histone acetyltransferase complex to chromatin. Interacts with Nelf-A. Interacts with NELF-B.

It is found in the nucleus. It localises to the chromosome. Its function is as follows. Transcription factor involved in X-chromosome dosage compensation in males, the process by which transcription of the single X chromosome in the male is elevated. Binds to the DNA sequence (GA)n. Clamp-binding promotes nucleosome depletion and chromatin accessibility, thereby allowing access to other transcription factors. Specifically binds to cis-acting elements on the X-chromosome named chromatin entry sites and promotes recruitment of the male-specific lethal (MSL) histone acetyltransferase complex, which associates with actively transcribed genes on the male X-chromosome to upregulate their expression. Mechanistically, acts by promoting chromatin accessibility at chromatin entry sites, facilitating DNA-binding of msl-2, followed by MSL complex recruitment. In addition to dosage compensation, also involved in zygotic genome activation (ZGA), a critical event in early embryonic development during which the developmental control passes from maternally provided mRNAs to the expression of the zygotic genome after fertilization. Maternally-provided protein cooperates with Zelda (zld) to activate zygotic transcription by increasing chromatin accessibility at promoters of specific genes and facilitate zld occupancy at a subset of key embryonic promoters. Also acts as an activator of gypsy chromatin insulator function by promoting binding of Cp190 to chromatin. In Drosophila melanogaster (Fruit fly), this protein is Transcription factor Clamp.